Consider the following 723-residue polypeptide: Lim and transglutaminase domain protein ltd-1 (723 aa).

The LIM zinc-binding domain maps to 5 to 72 (QHCNRCGKQV…SNHVPIAGPH (68 aa)).

This sequence belongs to the transglutaminase-like superfamily. As to expression, expressed in the Y and U rectal epithelial cells, in marginal cells of the terminal bulb and isthmus of the pharynx (at protein level).

The protein localises to the cytoplasm. The protein resides in the cytoskeleton. Its function is as follows. Cytoskeleton-associated protein. May play a role in hypodermal cell development. This Caenorhabditis elegans protein is Lim and transglutaminase domain protein ltd-1.